The sequence spans 1299 residues: DNA-directed RNA polymerase subunit beta' (1299 aa).

Residues Cys60, Cys62, Cys75, and Cys78 each coordinate Zn(2+). Positions 188 to 209 (GAKSDQKRRAKDGAEKEMGQTR) are disordered. Positions 535, 537, and 539 each coordinate Mg(2+). Residues Cys882, Cys959, Cys966, and Cys969 each coordinate Zn(2+).

It belongs to the RNA polymerase beta' chain family. In terms of assembly, the RNAP catalytic core consists of 2 alpha, 1 beta, 1 beta' and 1 omega subunit. When a sigma factor is associated with the core the holoenzyme is formed, which can initiate transcription. Mg(2+) is required as a cofactor. It depends on Zn(2+) as a cofactor.

It catalyses the reaction RNA(n) + a ribonucleoside 5'-triphosphate = RNA(n+1) + diphosphate. Functionally, DNA-dependent RNA polymerase catalyzes the transcription of DNA into RNA using the four ribonucleoside triphosphates as substrates. The protein is DNA-directed RNA polymerase subunit beta' of Clavibacter sepedonicus (Clavibacter michiganensis subsp. sepedonicus).